A 238-amino-acid chain; its full sequence is tRNA (guanine-N(7)-)-methyltransferase (238 aa).

Positions 68, 93, 120, and 143 each coordinate S-adenosyl-L-methionine. Residue Asp-143 is part of the active site. Residues Lys-147, Asp-179, and 216-219 (TKFE) each bind substrate.

This sequence belongs to the class I-like SAM-binding methyltransferase superfamily. TrmB family.

It catalyses the reaction guanosine(46) in tRNA + S-adenosyl-L-methionine = N(7)-methylguanosine(46) in tRNA + S-adenosyl-L-homocysteine. It participates in tRNA modification; N(7)-methylguanine-tRNA biosynthesis. In terms of biological role, catalyzes the formation of N(7)-methylguanine at position 46 (m7G46) in tRNA. The polypeptide is tRNA (guanine-N(7)-)-methyltransferase (Shewanella woodyi (strain ATCC 51908 / MS32)).